Consider the following 299-residue polypeptide: ATP phosphoribosyltransferase (299 aa).

This sequence belongs to the ATP phosphoribosyltransferase family. Long subfamily. Equilibrium between an active dimeric form, an inactive hexameric form and higher aggregates. Interconversion between the various forms is largely reversible and is influenced by the natural substrates and inhibitors of the enzyme. The cofactor is Mg(2+).

It is found in the cytoplasm. The catalysed reaction is 1-(5-phospho-beta-D-ribosyl)-ATP + diphosphate = 5-phospho-alpha-D-ribose 1-diphosphate + ATP. Its pathway is amino-acid biosynthesis; L-histidine biosynthesis; L-histidine from 5-phospho-alpha-D-ribose 1-diphosphate: step 1/9. With respect to regulation, feedback inhibited by histidine. Catalyzes the condensation of ATP and 5-phosphoribose 1-diphosphate to form N'-(5'-phosphoribosyl)-ATP (PR-ATP). Has a crucial role in the pathway because the rate of histidine biosynthesis seems to be controlled primarily by regulation of HisG enzymatic activity. The polypeptide is ATP phosphoribosyltransferase (Salmonella enteritidis PT4 (strain P125109)).